The chain runs to 285 residues: Phosphatidylglycerol--prolipoprotein diacylglyceryl transferase (285 aa).

A run of 4 helical transmembrane segments spans residues 26-46 (IALH…WWYV), 71-91 (FVVW…VLIW), 107-127 (WDGG…IIWF), and 133-153 (INIW…IGVV). Position 154 (R154) interacts with a 1,2-diacyl-sn-glycero-3-phospho-(1'-sn-glycerol). The next 3 membrane-spanning stretches (helical) occupy residues 194–214 (LMEG…FKAF), 218–238 (GTVA…SEIF), and 256–276 (GFTY…YAIF).

The protein belongs to the Lgt family.

It is found in the cell inner membrane. The enzyme catalyses L-cysteinyl-[prolipoprotein] + a 1,2-diacyl-sn-glycero-3-phospho-(1'-sn-glycerol) = an S-1,2-diacyl-sn-glyceryl-L-cysteinyl-[prolipoprotein] + sn-glycerol 1-phosphate + H(+). It participates in protein modification; lipoprotein biosynthesis (diacylglyceryl transfer). Catalyzes the transfer of the diacylglyceryl group from phosphatidylglycerol to the sulfhydryl group of the N-terminal cysteine of a prolipoprotein, the first step in the formation of mature lipoproteins. This is Phosphatidylglycerol--prolipoprotein diacylglyceryl transferase from Bartonella bacilliformis (strain ATCC 35685 / KC583 / Herrer 020/F12,63).